Reading from the N-terminus, the 307-residue chain is Pantothenate kinase (307 aa).

An ATP-binding site is contributed by 87–94; it reads GSVAVGKS.

The protein belongs to the prokaryotic pantothenate kinase family.

Its subcellular location is the cytoplasm. It carries out the reaction (R)-pantothenate + ATP = (R)-4'-phosphopantothenate + ADP + H(+). It participates in cofactor biosynthesis; coenzyme A biosynthesis; CoA from (R)-pantothenate: step 1/5. This chain is Pantothenate kinase, found in Vibrio vulnificus (strain YJ016).